The sequence spans 195 residues: ATP-dependent Clp protease proteolytic subunit (195 aa).

The active-site Nucleophile is the Ser-99. Residue His-124 is part of the active site.

The protein belongs to the peptidase S14 family. As to quaternary structure, fourteen ClpP subunits assemble into 2 heptameric rings which stack back to back to give a disk-like structure with a central cavity, resembling the structure of eukaryotic proteasomes.

It localises to the cytoplasm. It catalyses the reaction Hydrolysis of proteins to small peptides in the presence of ATP and magnesium. alpha-casein is the usual test substrate. In the absence of ATP, only oligopeptides shorter than five residues are hydrolyzed (such as succinyl-Leu-Tyr-|-NHMec, and Leu-Tyr-Leu-|-Tyr-Trp, in which cleavage of the -Tyr-|-Leu- and -Tyr-|-Trp bonds also occurs).. Its function is as follows. Cleaves peptides in various proteins in a process that requires ATP hydrolysis. Has a chymotrypsin-like activity. Plays a major role in the degradation of misfolded proteins. The protein is ATP-dependent Clp protease proteolytic subunit of Coxiella burnetii (strain RSA 331 / Henzerling II).